Reading from the N-terminus, the 210-residue chain is Dynactin-associated protein (210 aa).

Residues 1–113 are Cytoplasmic-facing; sequence MVADIKGNEQ…YCRNDWSMWK (113 aa). The helical; Signal-anchor for type II membrane protein transmembrane segment at 114 to 134 threads the bilayer; the sequence is VFLACLLACVIMTAIGVLIIC. The Extracellular segment spans residues 135-210; the sequence is LVNNKGSANS…PITVAPTDHL (76 aa). Residues 168-210 form a disordered region; sequence ACPPTMTTTSTVPASTATESTTSTATAATTSTEPITVAPTDHL. Positions 171-203 are enriched in low complexity; the sequence is PTMTTTSTVPASTATESTTSTATAATTSTEPIT.

In terms of assembly, interacts with DCTN1 and DCTN2. Expressed in fibroblast and numerous cancer cell lines (at protein level).

The protein resides in the golgi apparatus membrane. The protein localises to the cell membrane. Plays a role in the regulation of cell proliferation. Promotes activation of the AKT1 signaling pathway. Promotes phosphorylation of AKT1 at 'Ser-473'. This chain is Dynactin-associated protein (DYNAP), found in Homo sapiens (Human).